The following is a 134-amino-acid chain: Small ribosomal subunit protein uS11 (134 aa).

The protein belongs to the universal ribosomal protein uS11 family. In terms of assembly, part of the 30S ribosomal subunit. Interacts with proteins S7 and S18. Binds to IF-3.

Located on the platform of the 30S subunit, it bridges several disparate RNA helices of the 16S rRNA. Forms part of the Shine-Dalgarno cleft in the 70S ribosome. In Delftia acidovorans (strain DSM 14801 / SPH-1), this protein is Small ribosomal subunit protein uS11.